The chain runs to 117 residues: uncharacterized protein (117 aa).

The next 4 helical transmembrane spans lie at 3–23 (AVPIILVFAAGLNSCIGNILL), 40–60 (FLTPGFVGGVVFYGINVLLFA), 66–86 (LEVSVAYPILAGSGFAMLIIA), and 94–114 (PFHLHKWIGVALVLVGIIFLA).

The protein to E.coli and S.aureus ethidium bromide resistance proteins (ebr/QacC/EmrE/MvrC).

It is found in the cell membrane. This is an uncharacterized protein from Sinorhizobium fredii (strain NBRC 101917 / NGR234).